Here is a 776-residue protein sequence, read N- to C-terminus: 5-methyltetrahydropteroyltriglutamate--homocysteine methyltransferase (776 aa).

5-methyltetrahydropteroyltri-L-glutamate-binding positions include 13 to 16 and lysine 127; that span reads RELK. L-homocysteine contacts are provided by residues 450–452 and glutamate 503; that span reads IGS. L-methionine-binding positions include 450-452 and glutamate 503; that span reads IGS. Tryptophan 580 contacts 5-methyltetrahydropteroyltri-L-glutamate. Residue aspartate 618 participates in L-homocysteine binding. Position 618 (aspartate 618) interacts with L-methionine. Glutamate 624 lines the 5-methyltetrahydropteroyltri-L-glutamate pocket. Zn(2+)-binding residues include histidine 660, cysteine 662, and glutamate 684. The active-site Proton donor is the histidine 713. Cysteine 745 contributes to the Zn(2+) binding site.

It belongs to the vitamin-B12 independent methionine synthase family. Zn(2+) is required as a cofactor.

It carries out the reaction 5-methyltetrahydropteroyltri-L-glutamate + L-homocysteine = tetrahydropteroyltri-L-glutamate + L-methionine. It functions in the pathway amino-acid biosynthesis; L-methionine biosynthesis via de novo pathway; L-methionine from L-homocysteine (MetE route): step 1/1. Functionally, catalyzes the transfer of a methyl group from 5-methyltetrahydrofolate to homocysteine resulting in methionine formation. The protein is 5-methyltetrahydropteroyltriglutamate--homocysteine methyltransferase of Mesorhizobium japonicum (strain LMG 29417 / CECT 9101 / MAFF 303099) (Mesorhizobium loti (strain MAFF 303099)).